The chain runs to 653 residues: Translation factor GUF1, mitochondrial (653 aa).

Positions 56 to 236 (ENYRNFSIVA…SIIKNIPAPN (181 aa)) constitute a tr-type G domain. Residues 65–72 (AHVDHGKS), 129–133 (DTPGH), and 183–186 (NKID) each bind GTP.

Belongs to the TRAFAC class translation factor GTPase superfamily. Classic translation factor GTPase family. LepA subfamily.

The protein resides in the mitochondrion inner membrane. The enzyme catalyses GTP + H2O = GDP + phosphate + H(+). In terms of biological role, promotes mitochondrial protein synthesis. May act as a fidelity factor of the translation reaction, by catalyzing a one-codon backward translocation of tRNAs on improperly translocated ribosomes. Binds to mitochondrial ribosomes in a GTP-dependent manner. This Candida tropicalis (strain ATCC MYA-3404 / T1) (Yeast) protein is Translation factor GUF1, mitochondrial.